The chain runs to 402 residues: Plasminogen activator inhibitor 1 (402 aa).

Positions methionine 1–alanine 23 are cleaved as a signal peptide. N-linked (GlcNAc...) asparagine glycans are attached at residues asparagine 232, asparagine 288, and asparagine 352.

Belongs to the serpin family. Forms a heterodimer with TMPRSS7. Interacts with VTN. Binds LRP1B; binding is followed by internalization and degradation. Interacts with PPP1CB. In complex with PLAU/uPA, interacts with PLAUR/uPAR. Interacts with SORL1 and LRP1, either alone or in complex with PLAU; these interactions are abolished in the presence of LRPAP1/RAP. The ternary complex composed of PLAUR-PLAU-PAI1 also interacts with SORL1. Interacts with PLAT/tPA. Also interacts with SORL1, when complexed to PLAT/tPA.

The protein resides in the secreted. In terms of biological role, serine protease inhibitor. Inhibits TMPRSS7. Is a primary inhibitor of tissue-type plasminogen activator (PLAT) and urokinase-type plasminogen activator (PLAU). As PLAT inhibitor, it is required for fibrinolysis down-regulation and is responsible for the controlled degradation of blood clots. As PLAU inhibitor, it is involved in the regulation of cell adhesion and spreading. Acts as a regulator of cell migration, independently of its role as protease inhibitor. It is required for stimulation of keratinocyte migration during cutaneous injury repair. It is involved in cellular and replicative senescence. Plays a role in alveolar type 2 cells senescence in the lung. Is involved in the regulation of cementogenic differentiation of periodontal ligament stem cells, and regulates odontoblast differentiation and dentin formation during odontogenesis. The sequence is that of Plasminogen activator inhibitor 1 (SERPINE1) from Sus scrofa (Pig).